The following is a 238-amino-acid chain: 1-(5-phosphoribosyl)-5-[(5-phosphoribosylamino)methylideneamino] imidazole-4-carboxamide isomerase (238 aa).

Asp8 functions as the Proton acceptor in the catalytic mechanism. Asp129 serves as the catalytic Proton donor.

Belongs to the HisA/HisF family.

The protein localises to the cytoplasm. The enzyme catalyses 1-(5-phospho-beta-D-ribosyl)-5-[(5-phospho-beta-D-ribosylamino)methylideneamino]imidazole-4-carboxamide = 5-[(5-phospho-1-deoxy-D-ribulos-1-ylimino)methylamino]-1-(5-phospho-beta-D-ribosyl)imidazole-4-carboxamide. The protein operates within amino-acid biosynthesis; L-histidine biosynthesis; L-histidine from 5-phospho-alpha-D-ribose 1-diphosphate: step 4/9. The protein is 1-(5-phosphoribosyl)-5-[(5-phosphoribosylamino)methylideneamino] imidazole-4-carboxamide isomerase of Anaeromyxobacter dehalogenans (strain 2CP-1 / ATCC BAA-258).